The chain runs to 976 residues: MSHRNKALVAIVAGTALLISSGAAIGQAAIADERSGKAMQTLNVDFATETGNFRGGASGTLYGLGDDGSPADAILDGAQVENSSQKPPSGTQHPSGDALALENQFFSNGGNELAVYMQDYYPDWSYNSGNRPSDSRTYVLDVPVDDPSYGTYTNGGDGVWDYEQVTEIVINKVLANTEHPDQYTFIPFNEPDGGNWYASGDNASAKIFRTFLSDWDSEYKLIQKIWQQYKNGEKPSKVKPTADHARVAGPGDCVYRQNRSSAFLSHAKSQNTLPDVFVWHELGKESLSSFRSHYESYRKLEKKYGINPIDVNITEYGELRDMSVPGQLIQWQSMFEDEKVQAETAYWNYAGNLSDNMARANSANAGWWQFKWYGDLRGAQTVKVSSDYMNKADSLQGIAAIDRTNKKATVLYGGANDANADQVKNDGSNIPVTVHLTGLDQNLFGSTVDVEVRENAFTGPDGVAATPRVVNALSDVDISSGTLDVTTTSVDRYASYQLIVTPHQDRVLSIDNAAAGRALLVEEVENTVLSGGAQTYIKTPWGDGWNYFMTSGNGDVGSFKTGSIASWTVDVPADGIYRFQVISGNTGFPGDNDVSVDGQSAGTIHFGAELAMKPAAKWLYRGSGEVLLRLKQGQHQIQLHGSSMDNTLDKFLLYQVSASDNSLDRIEYPADQFRLESGALLTYDQDGARGFASLNGGEAKLFAHAWESGYHSVKVVYTASRGDSMVLSVNGTSVTTITAESDGLQSSMVNVALSEGINKLELSGDAVSIRDITTCRDAADDSNAITLEAESLQLAGGAQTRENSASNASGYSYVTGLGKQFVTEESGAFGMGDQTRVVTLDTNNTPKIADAVRGTVTIPAGTIPAGKFNMVVRFSNDAFIGKHDYNPQIVDLGLQVRDGTANGEEVARGAFRYTYSDSNFLERAMTVETSGSALVLGNWDEPGVGAGAVSWGVGPNLDYVQFYPVMVGDVYHQSLA.

The first 28 residues, 1-28 (MSHRNKALVAIVAGTALLISSGAAIGQA), serve as a signal peptide directing secretion. Catalysis depends on glutamate 190, which acts as the Proton donor. Glutamate 315 acts as the Nucleophile in catalysis. The region spanning 519–654 (LLVEEVENTV…DNTLDKFLLY (136 aa)) is the CBM6 domain.

It belongs to the glycosyl hydrolase 39 family.

It is found in the secreted. The catalysed reaction is Hydrolysis of beta-L-Arap-(1-&gt;3)-L-Araf disaccharides from non-reducing terminals in branches of type II arabinogalactan attached to proteins.. In terms of biological role, hydrolase involved in the degradation of the gum arabic arabinogalactan protein (AGP) and larch AGP. Catalyzes the release of 3-O-beta-L-arabinopyranosyl-L-arabinose (beta-L-Arap-(1-&gt;3)-L-Ara) from gum arabic AGP and larch AGP. Also cleaves a small amount of beta-L-Arap-(1-&gt;3)-L-Ara from sugar beet arabinan, but wheat AGP cannot be used as a substrate. Can also release 3-O-alpha-D-galactopyranosyl-L-arabinose (alpha-D-Galp-(1-&gt;3)-L-Ara) from gum arabic AGP, with low efficiency. The polypeptide is 3-O-beta-L-arabinopyranosyl-alpha-L-arabinofuranosidase (Bifidobacterium pseudocatenulatum).